A 162-amino-acid polypeptide reads, in one-letter code: NADH-quinone oxidoreductase subunit I (162 aa).

4Fe-4S ferredoxin-type domains follow at residues 54–83 and 93–122; these read RRYE…IESE and TRYD…ETHI. [4Fe-4S] cluster-binding residues include Cys-63, Cys-66, Cys-69, Cys-73, Cys-102, Cys-105, Cys-108, and Cys-112.

This sequence belongs to the complex I 23 kDa subunit family. As to quaternary structure, NDH-1 is composed of 14 different subunits. Subunits NuoA, H, J, K, L, M, N constitute the membrane sector of the complex. Requires [4Fe-4S] cluster as cofactor.

It localises to the cell inner membrane. The enzyme catalyses a quinone + NADH + 5 H(+)(in) = a quinol + NAD(+) + 4 H(+)(out). Its function is as follows. NDH-1 shuttles electrons from NADH, via FMN and iron-sulfur (Fe-S) centers, to quinones in the respiratory chain. The immediate electron acceptor for the enzyme in this species is believed to be ubiquinone. Couples the redox reaction to proton translocation (for every two electrons transferred, four hydrogen ions are translocated across the cytoplasmic membrane), and thus conserves the redox energy in a proton gradient. This chain is NADH-quinone oxidoreductase subunit I, found in Paraburkholderia xenovorans (strain LB400).